The primary structure comprises 119 residues: Large ribosomal subunit protein uL14 (119 aa).

This sequence belongs to the universal ribosomal protein uL14 family. In terms of assembly, part of the 50S ribosomal subunit. Forms a cluster with proteins L3 and L19. In the 70S ribosome, L14 and L19 interact and together make contacts with the 16S rRNA in bridges B5 and B8.

In terms of biological role, binds to 23S rRNA. Forms part of two intersubunit bridges in the 70S ribosome. The sequence is that of Large ribosomal subunit protein uL14 from Ehrlichia canis (strain Jake).